Consider the following 157-residue polypeptide: Probable intracellular pathogenesis-related protein T1 (157 aa).

Residues Asn79 and Asn117 are each glycosylated (N-linked (GlcNAc...) asparagine).

It belongs to the BetVI family.

The sequence is that of Probable intracellular pathogenesis-related protein T1 (PCKR3) from Catharanthus roseus (Madagascar periwinkle).